The chain runs to 242 residues: Biosynthetic peptidoglycan transglycosylase (242 aa).

A helical transmembrane segment spans residues 19–39; it reads ILAALAVFWGGGIALFSVVPV.

The protein belongs to the glycosyltransferase 51 family.

The protein resides in the cell inner membrane. It catalyses the reaction [GlcNAc-(1-&gt;4)-Mur2Ac(oyl-L-Ala-gamma-D-Glu-L-Lys-D-Ala-D-Ala)](n)-di-trans,octa-cis-undecaprenyl diphosphate + beta-D-GlcNAc-(1-&gt;4)-Mur2Ac(oyl-L-Ala-gamma-D-Glu-L-Lys-D-Ala-D-Ala)-di-trans,octa-cis-undecaprenyl diphosphate = [GlcNAc-(1-&gt;4)-Mur2Ac(oyl-L-Ala-gamma-D-Glu-L-Lys-D-Ala-D-Ala)](n+1)-di-trans,octa-cis-undecaprenyl diphosphate + di-trans,octa-cis-undecaprenyl diphosphate + H(+). It participates in cell wall biogenesis; peptidoglycan biosynthesis. Functionally, peptidoglycan polymerase that catalyzes glycan chain elongation from lipid-linked precursors. This chain is Biosynthetic peptidoglycan transglycosylase, found in Salmonella choleraesuis (strain SC-B67).